A 326-amino-acid chain; its full sequence is Regulation of nuclear pre-mRNA domain-containing protein 1B (326 aa).

Ser-2 bears the N-acetylserine mark. The region spanning 2–133 is the CID domain; sequence SSFSESALEK…QLKLSMEDSK (132 aa). Over residues 128–144 the composition is skewed to basic and acidic residues; that stretch reads SMEDSKSPPPKAAEEKK. The disordered stretch occupies residues 128–148; it reads SMEDSKSPPPKAAEEKKSLKR. Ser-132 and Ser-134 each carry phosphoserine. Tyr-161 carries the post-translational modification Phosphotyrosine. A phosphoserine mark is found at Ser-166 and Ser-299.

It belongs to the UPF0400 (RTT103) family. In terms of assembly, homodimer. May form a heterodimer with RPRD1A. Associates with RPAP2. Associates with the RNA polymerase II complex. As to expression, widely expressed in the adult with highest levels in liver, colon, prostate and uterus and lowest levels in heart and kidney. Not detected in rectum.

The protein localises to the nucleus. Functionally, interacts with phosphorylated C-terminal heptapeptide repeat domain (CTD) of the largest RNA polymerase II subunit POLR2A, and participates in dephosphorylation of the CTD by RPAP2. Transcriptional regulator which enhances expression of CCND1. Promotes binding of RNA polymerase II to the CCDN1 promoter and to the termination region before the poly-A site but decreases its binding after the poly-A site. Prevents RNA polymerase II from reading through the 3' end termination site and may allow it to be recruited back to the promoter through promotion of the formation of a chromatin loop. Also enhances the transcription of a number of other cell cycle-related genes including CDK2, CDK4, CDK6 and cyclin-E but not CDKN1A, CDKN1B or cyclin-A. Promotes cell proliferation. In Mus musculus (Mouse), this protein is Regulation of nuclear pre-mRNA domain-containing protein 1B (Rprd1b).